We begin with the raw amino-acid sequence, 338 residues long: Phenylalanine--tRNA ligase alpha subunit (338 aa).

Residue glutamate 252 participates in Mg(2+) binding.

It belongs to the class-II aminoacyl-tRNA synthetase family. Phe-tRNA synthetase alpha subunit type 1 subfamily. Tetramer of two alpha and two beta subunits. Requires Mg(2+) as cofactor.

It is found in the cytoplasm. It carries out the reaction tRNA(Phe) + L-phenylalanine + ATP = L-phenylalanyl-tRNA(Phe) + AMP + diphosphate + H(+). The protein is Phenylalanine--tRNA ligase alpha subunit of Pseudomonas aeruginosa (strain UCBPP-PA14).